A 423-amino-acid chain; its full sequence is Glutamate-1-semialdehyde 2,1-aminomutase (423 aa).

An N6-(pyridoxal phosphate)lysine modification is found at K263.

The protein belongs to the class-III pyridoxal-phosphate-dependent aminotransferase family. HemL subfamily. It depends on pyridoxal 5'-phosphate as a cofactor.

Its subcellular location is the cytoplasm. The catalysed reaction is (S)-4-amino-5-oxopentanoate = 5-aminolevulinate. It participates in porphyrin-containing compound metabolism; protoporphyrin-IX biosynthesis; 5-aminolevulinate from L-glutamyl-tRNA(Glu): step 2/2. The sequence is that of Glutamate-1-semialdehyde 2,1-aminomutase from Ignicoccus hospitalis (strain KIN4/I / DSM 18386 / JCM 14125).